The sequence spans 96 residues: Large ribosomal subunit protein uL4 (96 aa).

The interval 77–96 is disordered; it reads RAPNKKVKRRELKKNPLKNL. Over residues 79 to 96 the composition is skewed to basic residues; the sequence is PNKKVKRRELKKNPLKNL.

This sequence belongs to the universal ribosomal protein uL4 family. Component of the large ribosomal subunit.

It is found in the cytoplasm. Functionally, component of the large ribosomal subunit. The ribosome is a large ribonucleoprotein complex responsible for the synthesis of proteins in the cell. This chain is Large ribosomal subunit protein uL4 (rpl4), found in Xenopus tropicalis (Western clawed frog).